The primary structure comprises 509 residues: tRNA-2-methylthio-N(6)-dimethylallyladenosine synthase (509 aa).

The disordered stretch occupies residues 1–21; it reads MNEKQRIESGQVNPSDKKSEK. Positions 66 to 184 constitute an MTTase N-terminal domain; that stretch reads RKFYIRTYGC…LPELLSEAYL (119 aa). [4Fe-4S] cluster-binding residues include Cys-75, Cys-111, Cys-145, Cys-221, Cys-225, and Cys-228. Residues 207–437 form the Radical SAM core domain; it reads RTGKIKGWVN…NEVVNEISAK (231 aa). The TRAM domain occupies 440–503; it reads KEYEGQVVEV…TWSLDGEMVG (64 aa).

Belongs to the methylthiotransferase family. MiaB subfamily. In terms of assembly, monomer. [4Fe-4S] cluster is required as a cofactor.

It is found in the cytoplasm. It catalyses the reaction N(6)-dimethylallyladenosine(37) in tRNA + (sulfur carrier)-SH + AH2 + 2 S-adenosyl-L-methionine = 2-methylsulfanyl-N(6)-dimethylallyladenosine(37) in tRNA + (sulfur carrier)-H + 5'-deoxyadenosine + L-methionine + A + S-adenosyl-L-homocysteine + 2 H(+). In terms of biological role, catalyzes the methylthiolation of N6-(dimethylallyl)adenosine (i(6)A), leading to the formation of 2-methylthio-N6-(dimethylallyl)adenosine (ms(2)i(6)A) at position 37 in tRNAs that read codons beginning with uridine. The chain is tRNA-2-methylthio-N(6)-dimethylallyladenosine synthase from Bacillus licheniformis (strain ATCC 14580 / DSM 13 / JCM 2505 / CCUG 7422 / NBRC 12200 / NCIMB 9375 / NCTC 10341 / NRRL NRS-1264 / Gibson 46).